The chain runs to 82 residues: RNA-binding protein Hfq (82 aa).

A Sm domain is found at 9–68; the sequence is DPYLNTLRKERVPVSIYLVNGIKLQGQIESFDQFVILLKNTVSQMVYKTAISTVVPSRPV.

This sequence belongs to the Hfq family. In terms of assembly, homohexamer.

In terms of biological role, RNA chaperone that binds small regulatory RNA (sRNAs) and mRNAs to facilitate mRNA translational regulation in response to envelope stress, environmental stress and changes in metabolite concentrations. Also binds with high specificity to tRNAs. The protein is RNA-binding protein Hfq of Pseudomonas aeruginosa.